The sequence spans 372 residues: Enolase (372 aa).

2 residues coordinate substrate: His95 and Glu104. Glu147 functions as the Proton donor in the catalytic mechanism. 3 residues coordinate Mg(2+): Asp182, Glu232, and Asp257. Glu232 and Asp257 together coordinate substrate. Lys282 (proton acceptor) is an active-site residue. Substrate-binding positions include 309 to 312 and Lys333; that span reads SHRS.

Belongs to the enolase family. As to quaternary structure, homodimer. Mg(2+) is required as a cofactor.

It localises to the cytoplasm. It catalyses the reaction (2R)-2-phosphoglycerate = phosphoenolpyruvate + H2O. The protein operates within carbohydrate degradation; glycolysis; pyruvate from D-glyceraldehyde 3-phosphate: step 4/5. This is Enolase (ENO) from Chlamydomonas reinhardtii (Chlamydomonas smithii).